The sequence spans 573 residues: MSIAESTVLGEEPEWFRTAVFYEVLVRSFRDPNAGGTGDFRGLAEKLDYLQWLGVDCLWVPPFFSSPLRDGGYDVADYTGILPEIGTVEDFHAFLDGAHERGIRVIIDFVMNHTSDAHPWFQASRSDPDGPYGDFYVWSDTDELYQDARVIFVDTEPSNWTWDQTRGQYYWHRFFHHQPDLNFDNPKVQDAMLEAMAFWLDMGLDGFRLDAVPYLYERPGTNGENLPETHEMLKRVRRFVDDNYPDRVLLYEANQWPTDVVEYFGPEEREDGTVVGPESHMAFHFPVMPRIFMAVRRESRFPISEIMEQTPAIPEGCQWGIFLRNHDELTLEMVTDEDRDYMWGEYAKDPRMKANIGIRRRLAPLLDNDTNQIELFTALLLSLPGSPVLYYGDEIGMGDNIWLGDRDGVRTPMQRTPDRNVGFSAATPGKLHLPTIQDPVYGYQSVNVEAQLENPSSLLHWTRRMIHIRRQRDAFGLGTFEDLGGSNPAVLSYVRELPGDGGDDVILCVNNLSRFPQPVELDLRKYEGRVPVELIGGVPFPAVGELPYLLTLSGHGFYWFRLTDPDTTGRPVL.

Asp-70 is a substrate binding site. A Ca(2+)-binding site is contributed by Asn-112. 2 residues coordinate substrate: His-113 and Gln-178. Asp-180 serves as a coordination point for Ca(2+). Arg-208 is a binding site for substrate. Asp-210 serves as the catalytic Nucleophile. The Ca(2+) site is built by Tyr-214, Leu-215, and Glu-217. Glu-252 acts as the Proton donor in catalysis. Positions 326 and 327 each coordinate substrate.

This sequence belongs to the glycosyl hydrolase 13 family. TreS subfamily.

It catalyses the reaction D-maltose = alpha,alpha-trehalose. Functionally, catalyzes the reversible interconversion of maltose and alpha,alpha-trehalose by transglucosylation. This Pimelobacter sp. (strain R48) protein is Trehalose synthase (treS).